The chain runs to 539 residues: NADH-quinone oxidoreductase subunit N 2 (539 aa).

13 consecutive transmembrane segments (helical) span residues 11-31, 52-72, 106-126, 141-161, 193-213, 248-268, 296-316, 329-349, 357-377, 385-405, 429-449, 462-484, and 500-520; these read LIPE…DVLT, LMGL…FSWM, PLTH…VILT, LILF…LIMI, YIFG…LLGL, GVAI…VAIV, AGFF…SILG, WTSL…LAAL, MLAY…VGTQ, LMYL…LALV, LLLT…GFFV, AKWL…LRFL, and VGFG…GLGI.

This sequence belongs to the complex I subunit 2 family. In terms of assembly, NDH-1 is composed of 14 different subunits. Subunits NuoA, H, J, K, L, M, N constitute the membrane sector of the complex.

The protein resides in the cell membrane. The enzyme catalyses a quinone + NADH + 5 H(+)(in) = a quinol + NAD(+) + 4 H(+)(out). Functionally, NDH-1 shuttles electrons from NADH, via FMN and iron-sulfur (Fe-S) centers, to quinones in the respiratory chain. The immediate electron acceptor for the enzyme in this species is believed to be ubiquinone. Couples the redox reaction to proton translocation (for every two electrons transferred, four hydrogen ions are translocated across the cytoplasmic membrane), and thus conserves the redox energy in a proton gradient. This is NADH-quinone oxidoreductase subunit N 2 from Herpetosiphon aurantiacus (strain ATCC 23779 / DSM 785 / 114-95).